The following is a 201-amino-acid chain: MTTRIVVAQILGAHGVHGRVKLKSFTADETAVFGYAPLTDESGRREFKLRRTGTGKDHFLAEVDGITGKEAADALRGTRLYIERDRLPAPEDEDEFYHADLIGLDTVTADDQPFGTIKAIYDFGAGDMLEIRHVSEKTVFLPFTKACVPVIEIAAGRVVVEPPANFFAPAGPQPAEGEEMPDGALEALEGEEAGAGTAPQP.

One can recognise a PRC barrel domain in the interval 92 to 166 (DEDEFYHADL…RVVVEPPANF (75 aa)). The tract at residues 169-201 (PAGPQPAEGEEMPDGALEALEGEEAGAGTAPQP) is disordered.

It belongs to the RimM family. As to quaternary structure, binds ribosomal protein uS19.

The protein resides in the cytoplasm. Functionally, an accessory protein needed during the final step in the assembly of 30S ribosomal subunit, possibly for assembly of the head region. Essential for efficient processing of 16S rRNA. May be needed both before and after RbfA during the maturation of 16S rRNA. It has affinity for free ribosomal 30S subunits but not for 70S ribosomes. The chain is Ribosome maturation factor RimM from Rhodospirillum centenum (strain ATCC 51521 / SW).